Reading from the N-terminus, the 417-residue chain is NADH-quinone oxidoreductase subunit D (417 aa).

It belongs to the complex I 49 kDa subunit family. In terms of assembly, NDH-1 is composed of 14 different subunits. Subunits NuoB, C, D, E, F, and G constitute the peripheral sector of the complex.

It is found in the cell inner membrane. It catalyses the reaction a quinone + NADH + 5 H(+)(in) = a quinol + NAD(+) + 4 H(+)(out). In terms of biological role, NDH-1 shuttles electrons from NADH, via FMN and iron-sulfur (Fe-S) centers, to quinones in the respiratory chain. The immediate electron acceptor for the enzyme in this species is believed to be ubiquinone. Couples the redox reaction to proton translocation (for every two electrons transferred, four hydrogen ions are translocated across the cytoplasmic membrane), and thus conserves the redox energy in a proton gradient. This is NADH-quinone oxidoreductase subunit D from Polynucleobacter necessarius subsp. necessarius (strain STIR1).